The following is a 239-amino-acid chain: Fatty acid metabolism regulator protein (239 aa).

The region spanning 6-74 (QSPAGFAEEY…HGKPTKVNNF (69 aa)) is the HTH gntR-type domain. Residues 34 to 53 (ERELSELIGVTRTTLREVLQ) constitute a DNA-binding region (H-T-H motif).

Homodimer.

Its subcellular location is the cytoplasm. Functionally, multifunctional regulator of fatty acid metabolism. This Enterobacter sp. (strain 638) protein is Fatty acid metabolism regulator protein.